Here is a 150-residue protein sequence, read N- to C-terminus: Snaclec CTL-Eoc125 (150 aa).

The signal sequence occupies residues 1 to 23 (MGRFISVSFGLLVVFLSLSGIGA). Disulfide bonds link C27–C38, C55–C144, and C121–C136. In terms of domain architecture, C-type lectin spans 34-145 (YEGHCYKVFS…CSSTQQFICK (112 aa)).

It belongs to the snaclec family. As to quaternary structure, heterodimer; disulfide-linked. Expressed by the venom gland.

Its subcellular location is the secreted. In terms of biological role, interferes with one step of hemostasis (modulation of platelet aggregation, or coagulation cascade, for example). The protein is Snaclec CTL-Eoc125 of Echis ocellatus (Ocellated saw-scaled viper).